Reading from the N-terminus, the 272-residue chain is Glutamate racemase (272 aa).

Substrate-binding positions include 10 to 11 and 42 to 43; these read DS and YG. Residue C73 is the Proton donor/acceptor of the active site. 74–75 contacts substrate; it reads NT. C183 serves as the catalytic Proton donor/acceptor. Position 184 to 185 (184 to 185) interacts with substrate; it reads TH.

Belongs to the aspartate/glutamate racemases family.

The enzyme catalyses L-glutamate = D-glutamate. The protein operates within cell wall biogenesis; peptidoglycan biosynthesis. In terms of biological role, provides the (R)-glutamate required for cell wall biosynthesis. This chain is Glutamate racemase, found in Leifsonia xyli subsp. xyli (strain CTCB07).